The following is a 35-amino-acid chain: Phospholipase A2 bitanarin (35 aa).

The protein belongs to the phospholipase A2 family. Group II subfamily. Monomer. Requires Ca(2+) as cofactor. Contains 14 disulfide bonds. In terms of tissue distribution, expressed by the venom gland.

Its subcellular location is the secreted. The enzyme catalyses a 1,2-diacyl-sn-glycero-3-phosphocholine + H2O = a 1-acyl-sn-glycero-3-phosphocholine + a fatty acid + H(+). Its function is as follows. Snake venom phospholipase A2 (PLA2) that is the first competitive blocker of nicotinic acetylcholine receptors (nAChRs). Competes with alpha-bungarotoxin for binding to nAChRs and acetylcholine binding proteins (AChBPs) and blocks acetylcholine-elicited current. PLA2 catalyzes the calcium-dependent hydrolysis of the 2-acyl groups in 3-sn-phosphoglycerides. The chain is Phospholipase A2 bitanarin from Bitis arietans (African puff adder).